We begin with the raw amino-acid sequence, 3961 residues long: MSGILDRCTCTPNARVFVAEGQVYCTRCLSARSLLPLNLQVPELGVLGLFYRPEEPLRWTLPRAFPTVECSPTGACWLSAIFPIARMTSGNLNFQQRMVRVAGEIYRAGQLTPTVLKTIQVYERGCRWYPIVGPVPGVGVYANSLHVSDKPFPGATHVLTNLPLPQRPKPEDFCPFECAMADVYDIGRGAVMYVAGGKVSWAPRGGDEVKFEPVPKELKLVANRLHTSFPPHHVVDMSKFTFMTPGSGVSMRVEYQYGCLPADTVPEGNCWWRLFDLLPPEVQNKEIRHANQFGYQTKHGVPGKYLQRRLQVNGLRAVTDTHGPIVIQYFSVKESWIRHLKPVEEPSLPGFEDLLRIRVEPNTSPLAGKNEKIFRFGSHKWYGAGKRARKARSGATTMVAHRASSAHETRQATKHEGAGANKAEHLKLYSPPAEGNCGWHCISAIVNRMVNSNFETTLPERVRPPDDWATDEDLVNTIQILRLPAALDRNGACGGAKYVLKLEGEHWTVSVNPGMSPSLLPLECVQGCCEHKGGLGSPDAVEVSGFDPACLDRLLQVMHLPSSTIPAALAELSDDSNRPVSPAAATWTVSQSYARHRGGNHHDQVCLGKIISLCQVIEDCCCHQNKTNRATPEEVAAKIDQYLRGATSLEECLAKLERVSPPGAADTSFDWNVVLPGVEAAHQTTEQLHVNPCRTLVPPVTQEPLGKDSVPLTAFSLSNCYYPAQGNEVRHRERLNSVLSKLEEVVLEEYGLMSTGLGPRPVLPSGLDELKDQMEEDLLKLANTQATSEMMAWAAEQVDLKAWVKSYPRWTPPPPPPRVQPRKTKSVKSLPEDKPVPAPRRKVRSGCGSPVLMGDNVPNGSEDLTVGGPLNFPTPSEPMTPMSEPVLTPALQRVPKLMTPLDGSAPVPAPRRTVSRPMTPLSEPIFLSAPRHKFQQVEEANPATTTLTHQNEPLDLSASSQTEYEASPLASSQNMSILEAGGQEAEEVLSEISDILNDTSPAPVSSSSSLSSVKITRPKYSAQAIIDSGGPCSGHLQKEKEACLSIMREACDASKLSDPATQEWLSRMWDRVDMLTWRNTSAYQAFRTLNGRFEFLPKMILETPPPHPCGFVMLPHTPAPSVSAESDLTIGSVATEDVPRILGKIGDTGELLNQGPSAPFKGGPVCDQPAKNSRMSPRESDESIIAPPADTGGAGSFTDLPSSDSVDANGGGPLRTVKTKAGRLLDQLSCQVFSLVSHLPVFFSHLFKSDSGYSPGDWGFAAFTLFCLFLCYSYPFFGFAPLLGVFSGSSRRVRMGVFGCWLAFAVGLFKPVSDPVGTACEFDSPECRNVLHSFELLKPWDPVRSLVVGPVGLGLAILGRLLGGARYVWHFLLRFGIVADCILAGAYVLSQGRCKKCWGSCVRTAPNEIAFNVFPFTRATRSSLIDLCDRFCAPKGMDPIFLATVWRGCWTGRSPIEQPSEKPIAFAQLDEKRITARTVVAQPYDPNQAVKCLRVLQAGGAMVAEAVPKVVKVSAIPFRAPFFPAGVKVDPECRIVVDPDTFTTALRSGYSTTNLVLGMGDFAQLNGLKIRQISKPSGGGSHLVAALHVACSMALHMLAGVYVTAVGSCGTGTNDPWCTNPFAAPGYGPGSLCTSRLCISQHGLTLPLTALVAGFGLQEIALVVLIFVSMGGMAHRLSCKADMLCILLAIASYVWVPLTWLLCVFPCWLRWFSLHPLTILWLVFFLISVNIPSGILAVVLLVSLWLLGRYTNIAGLVTPYDIHHYTSGPRGVAALATAPDGTYLAAVRRAALTGRTMLFTPSQLGSLLEGAFRTQKPSLNTVNVVGSSMGSGGVFTIDGKIKCVTAAHVLTGNSARVSGVGFNQMLDFDVKGDFAIADCPNWQGAAPKAQFCEDGWTGRAYWLTSSGVEPGVIGNGFAFCFTACGDSGSPVITEAGELVGVHTGSNKQGGGIVTRPSGQFCNVTPIKLSELSEFFAGPKVPLGDVKIGSHIIKDTCEVPSDLCALLAAKPELEGGLSTVQLLCVFFLLWRMMGHAWTPLVAVGFFILNEILPAVLVRSVFSFGMFVLSWLTPWSAQVLMIRLLTAALNRNRLSLGFYSLGAVTSFVADLAVTQGHPLQVVMNLSTYAFLPRMMVVTSPVPVIACGVVHLLAIILYLFKYRCLHYVLVGDGVFSSAFFLRYFAEGKLREGVSQSCGMSHESLTGALAMRLTDEDLDFLTKWTDFKCFVSASNMRNAAGQFIEAAYAKALRIELAQLVQVDKVRGTLAKLEAFADTVAPQLSPGDIVVALGHTPVGSIFDLKVGSTKHTLQAIETRVLAGSKMTVARVVDPTPAPPPVPVPIPLPPKVLENGPNAWGDEDRLNKKKRRRMEAVGIFVMDGKKYQKFWDKNSGDVFYEEVHNSTDEWECLRAGDPADFDPETGVQCGHITIEDRVYNVFTSPSGRKFLVPANPENRRAQWEAAKLSVEQALGMMNVDGELTAKELEKLKGIIDKLQGLTKEQCLNCLLAASGLTRCGRGGLVVTETAVKIVKFHNRTFTLGPVNLKVASEVELKDAVEHNQHPVARPVDGGVVLLRSAVPSLIDVLISGADASPKLLARHGPGNTGIDGTLWDFEAEATKEEVALSAQIIQACDIRRGDAPEIGLPYKLYPVRGNPERVKGVLQNTRFGDIPYKTPSDTGSPVHAAACLTPNATPVTDGRSVLATTMPSGFELYVPTIPASVLDYLDSRPDCPKQLTEHGCEDAALRDLSKYDLVTQGFVLPGVLRLVRKYLFAHVGKCPPVHRPSTYPAKNSMAGINGNRFPTKDIQSVPEIDVLCAQAVRENWQTVTPCTLKKQYCGKKKTRTILGTNNFIALAHRAALSGVTQGFMKKAFNSPIALGKNKFKELQTPVLGRCLEADLASCDRSTPAIVRWFAANLLYELACAEEHLPSYVLNCCHDLLVTQSGAVTKRGGLSSGDPITSVSNTIYSLVIYAQHMVLSYFKSGHPHGLLFLQDQLKFEDMLKVQPLIVYSDDLVLYAESPSMPNYHWWVEHLNLMLGFQTDPKKTAITDSPTFLGCRIINGRQLVPNRDRILAALAYHMKASNVSEYYASAAAILMDSCACLEYDPEWFEELVVGIAQCARKDGYSFPGPPFFLSMWEKLRSNHEGKKSRMCGYCMAPAPYATACGLDVCVYHTHFHQHCPVIIWCGHPAGSGSCGECEPPLGKGTSPLDEVLEQVPYKPPRTVIMHVEQGLTPLDPGRYQTRRGLVSVRRGIRGNEVDLPDGDYASTALLPTCKEINMVAVAPNVLRSRFIIGPPGAGKTHWLLQQVQDGDVIYTPTHQTMLDMIRALGTCRFNVPAGTTLQFPAPSRTGPWVRILAGGWCPGKNSFLDEAAYCNHLDVLRLLSKTTLTCLGDFKQLHPVGFDSHCYVFDIMPQTQLKTIWRFGQNICDAIQPDYRDKLVSMVNTTRVTYVEKPVRYGQVLTPYHRDREDGAITIDSSQGATFDVVTLHLPTKDSLNRQRALVAITRARHAIFVYDPHRQLQSMFDLPAKGTPVNLAVHRDEQLIVLDRNNKEITVAQALGNGDKFRATDKRVVDSLRAICADLEGSSSPLPKVAHNLGFYFSPDLTQFAKLPAELAPHWPVVTTQNNERWPDRLVASLRPIHKYSRACIGAGYMVGPSVFLGTPGVVSYYLTKFVRGEAQVLPETVFSTGRIEVDCREYLDDREREVAESLPHAFIGDVKGTTVGGCHHVTSKYLPRFLPKESVAVVGVSSPGEAAKAFCTLTDVYLPDLEAYLHPETQSKCWKVMLDFKEVRLMVWKGKTAYFQLEGRHFTWYQLASYTSYIRVPVNSTVYLDPCMGPALCNRRVVGSTHWGADLAVTPYDYGAKIILSSAYHGEMPPGYKILACAEFSLDDPVRYKHTWGFESDTAYLYEFTGNGEDWEDYNGAFRARQKGKIYKATATSMKFHFPPGPVIEPTLGLN.

The C4-type; atypical zinc finger occupies 8–28 (CTCTPNARVFVAEGQVYCTRC). The Peptidase C31 domain occupies 69–180 (ECSPTGACWL…EDFCPFECAM (112 aa)). Residues 69–182 (ECSPTGACWL…FCPFECAMAD (114 aa)) are PCP1-alpha. Catalysis depends on for Nsp1-alpha papain-like cysteine proteinase activity residues C76 and H146. Residues 199 to 200 (VS) are important for host EIF2AK2 inhibition. The tract at residues 263–382 (DTVPEGNCWW…IFRFGSHKWY (120 aa)) is PCP1-beta. Positions 263-383 (DTVPEGNCWW…FRFGSHKWYG (121 aa)) constitute a Peptidase C32 domain. Catalysis depends on for Nsp1-beta papain-like cysteine proteinase activity residues C270 and H339. Residues 426–513 (LKLYSPPAEG…GEHWTVSVNP (88 aa)) form an OTU-like region. A Peptidase C33 domain is found at 428-535 (LYSPPAEGNC…QGCCEHKGGL (108 aa)). Residues C437 and H506 each act as for Nsp2 cysteine proteinase activity in the active site. Pro residues predominate over residues 810 to 819 (WTPPPPPPRV). 3 disordered regions span residues 810-875 (WTPP…FPTP), 899-918 (TPLD…SRPM), and 1148-1191 (TGEL…PADT). The next 7 membrane-spanning stretches (helical) occupy residues 1266-1286 (FCLF…LGVF), 1296-1316 (GVFG…SDPV), 1368-1388 (VWHF…GAYV), 1583-1603 (LVAA…GVYV), 1648-1668 (LTAL…LIFV), 1685-1705 (CILL…LCVF), and 1719-1739 (ILWL…LAVV). The HD1 stretch occupies residues 1266-1388 (FCLFLCYSYP…ADCILAGAYV (123 aa)). Residues 1583–1745 (LVAALHVACS…LAVVLLVSLW (163 aa)) form an HD2 region. The Peptidase S32 domain occupies 1810–2013 (GAFRTQKPSL…ALLAAKPELE (204 aa)). Active-site charge relay system; for 3C-like serine proteinase activity residues include H1848, D1873, and S1927. Transmembrane regions (helical) follow at residues 2036–2056 (WTPL…AVLV), 2060–2080 (FSFG…VLMI), 2092–2112 (LSLG…LAVT), 2137–2157 (SPVP…LYLF), and 2162–2182 (LHYV…RYFA). The segment at 2036 to 2157 (WTPLVAVGFF…HLLAIILYLF (122 aa)) is HD3. Residues 2488 to 2651 (IIDKLQGLTK…LPYKLYPVRG (164 aa)) enclose the NiRAN domain. The RdRp catalytic domain occupies 2890–3024 (GRCLEADLAS…YAESPSMPNY (135 aa)). Residues 3145–3208 (GKKSRMCGYC…PPLGKGTSPL (64 aa)) enclose the AV ZBD domain. Zn(2+) is bound by residues C3151, C3154, C3164, C3169, H3172, H3174, H3176, H3178, C3185, H3187, C3194, and C3197. The (+)RNA virus helicase ATP-binding domain occupies 3265-3417 (ASTALLPTCK…VFDIMPQTQL (153 aa)). An ATP-binding site is contributed by 3293-3300 (GPPGAGKT). Residues 3418 to 3546 (KTIWRFGQNI…AVHRDEQLIV (129 aa)) form the (+)RNA virus helicase C-terminal domain. The 97-residue stretch at 3585–3681 (EGSSSPLPKV…LTKFVRGEAQ (97 aa)) folds into the AV-Nsp11N/CoV-Nsp15M domain. Residues 3683-3805 (LPETVFSTGR…MVWKGKTAYF (123 aa)) form the NendoU domain. Residues H3714, H3729, and K3758 contribute to the active site.

This sequence belongs to the arteriviridae polyprotein family. Nsp1-alpha papain-like: Interacts with host RNF31. In terms of assembly, interacts with host EIF2AK2; this interaction occurs in host stress granules and leads to EIF2AK2 inhibition. Interacts with host G3BP1; this interaction probably plays a role in Nsp1-beta-mediated inhibition of host EIF2AK2. As to quaternary structure, interacts with host DDX18; this interaction redistributes host DDX18 to the cytoplasm. Interacts with host IFITM1. In terms of assembly, interacts with host DDX5. As to quaternary structure, interacts with host OTULIN. Interacts with host LGALS3. Post-translationally, specific enzymatic cleavages in vivo by its own proteases yield mature proteins. Nsp1 is autocleaved into two subunits, Nsp1-alpha and Nsp1-beta. There are two alternative pathways for processing. Either nsp4-5 is cleaved, which represents the major pathway or the nsp5-6 and nsp6-7 are processed, which represents the minor pathway. The major pathway occurs when nsp2 acts as a cofactor for nsp4.

It localises to the host nucleus. It is found in the host cytoplasm. The protein resides in the host membrane. Its subcellular location is the host endoplasmic reticulum. The protein localises to the host perinuclear region. The catalysed reaction is RNA(n) + a ribonucleoside 5'-triphosphate = RNA(n+1) + diphosphate. The enzyme catalyses ATP + H2O = ADP + phosphate + H(+). It catalyses the reaction Thiol-dependent hydrolysis of ester, thioester, amide, peptide and isopeptide bonds formed by the C-terminal Gly of ubiquitin (a 76-residue protein attached to proteins as an intracellular targeting signal).. It carries out the reaction uridylyl-uridylyl-ribonucleotide-RNA = a 3'-end uridylyl-2',3'-cyclophospho-uridine-RNA + a 5'-end dephospho-ribonucleoside-RNA. Its function is as follows. Contains the activities necessary for the transcription of negative stranded RNA, leader RNA, subgenomic mRNAs and progeny virion RNA as well as proteinases responsible for the cleavage of the polyprotein into functional products. In terms of biological role, inhibits host IFN-beta production. Plays a role in the degradation of the host transcriptional activator CREBBP protein. The degradation of host CREBBP which is a key component of the IFN enhanceosome is likely responsible for the inhibition of interferon mediated by Nsp1-alpha. Also participates in the inhibition of host NF-kappa-B activation by counteracting LUBAC-dependent induction of NF-kappa-B. Reduces host NEMO ubiquitination by blocking the interaction between the two LUBAC complex components RNF31 and SHARPIN. Plays a role in blocking host mRNA nuclear export to the cytoplasm and subversion of host protein synthesis. Additionally, inhibits the interferon-activated JAK/STAT signal transduction by mediating the ubiquitination and subsequent proteasomal degradation of host KPNA1. Repurposes the host antiviral stress granules into a proviral platform to counteract the EIF2AK2/PKR restriction, thereby regulating the host inflammatory response. Functionally, multifunctional protein that acts as a viral protease and as a viral antagonist of host immune response. Cleaves the nsp2/nsp3 site in the viral polyprotein. Displays deubiquitinating activity that cleaves both ubiquitinated and ISGylated products and therefore inhibits ubiquitin and ISG15-dependent host innate immunity. Also deubiquinates host NFKBIA, thereby interfering with NFKBIA degradation and impairing subsequent NF-kappa-B activation. Its function is as follows. Plays a role in the inhibition of the immune response by interacting with host IFITM1. This interaction leads to the proteasomal degradation of the IFN-induced antiviral protein IFITM1. In terms of biological role, cleaves the majority of cleavage sites present in the C-terminus of the polyprotein. Triggers host apoptosis through caspase-3, -8, and -9 activations. Subverts host innate immune responses through its protease activity. Targets the NF-kappa-B essential modulator NEMO and mediates its cleavage. Blocks host interferon beta induction and downstream signaling by cleaving mitochondrial MAVS, dislodging it from the mitochondria. Impairs host defense by cleaving host mRNA-decapping enzyme DCP1A to attenuate its antiviral activity. Plays a role in the initial induction of autophagosomes from host endoplasmic reticulum. Functionally, plays a role in the inhibition of host STAT3 signaling pathway by inducing the degradation of STAT3. Its function is as follows. Responsible for replication and transcription of the viral RNA genome. In terms of biological role, displays RNA and DNA duplex-unwinding activities with 5' to 3' polarity. Plays a role in viral transcription/replication and prevents the simultaneous activation of host cell dsRNA sensors, such as MDA5/IFIH1, OAS, PKR and NLRP3 inflammasome. Acts by degrading the 5'-polyuridines generated during replication of the poly(A) region of viral genomic and subgenomic RNAs. Catalyzes a two-step reaction in which a 2'3'-cyclic phosphate (2'3'-cP) is first generated by 2'-O transesterification, which is then hydrolyzed to a 3'-phosphate (3'-P). If not degraded, poly(U) RNA would hybridize with poly(A) RNA tails and activate host dsRNA sensors. Also plays a role in the inhibition of host type I interferon production by recruiting host OTULIN to promote removal of linear ubiquitination targeting host NEMO. This chain is Replicase polyprotein 1ab (rep), found in Porcine reproductive and respiratory syndrome virus (strain HB-1) (PRRSV).